The chain runs to 653 residues: DNA mismatch repair protein MutL (653 aa).

A disordered region spans residues 368–413 (EVSQVAEPEGKTDITNKKETETKEKAEKKENKQEEKEEKTSAPEYV). Basic and acidic residues predominate over residues 375–408 (PEGKTDITNKKETETKEKAEKKENKQEEKEEKTS).

This sequence belongs to the DNA mismatch repair MutL/HexB family.

Its function is as follows. This protein is involved in the repair of mismatches in DNA. It is required for dam-dependent methyl-directed DNA mismatch repair. May act as a 'molecular matchmaker', a protein that promotes the formation of a stable complex between two or more DNA-binding proteins in an ATP-dependent manner without itself being part of a final effector complex. The polypeptide is DNA mismatch repair protein MutL (Lactobacillus delbrueckii subsp. bulgaricus (strain ATCC 11842 / DSM 20081 / BCRC 10696 / JCM 1002 / NBRC 13953 / NCIMB 11778 / NCTC 12712 / WDCM 00102 / Lb 14)).